The primary structure comprises 489 residues: Glycogen synthase (489 aa).

Lysine 15 contacts ADP-alpha-D-glucose.

It belongs to the glycosyltransferase 1 family. Bacterial/plant glycogen synthase subfamily.

It catalyses the reaction [(1-&gt;4)-alpha-D-glucosyl](n) + ADP-alpha-D-glucose = [(1-&gt;4)-alpha-D-glucosyl](n+1) + ADP + H(+). The protein operates within glycan biosynthesis; glycogen biosynthesis. Its function is as follows. Synthesizes alpha-1,4-glucan chains using ADP-glucose. The polypeptide is Glycogen synthase (Francisella tularensis subsp. novicida (strain U112)).